The primary structure comprises 239 residues: Lipid transferase CIDEC (239 aa).

The required for liquid-liquid phase separation (LLPS) stretch occupies residues 1–35; sequence MDYAMKSLSLLYPRSLSRHVAVSTAVVTQQLVSKP. The CIDE-N domain maps to 41–118; that stretch reads RARPCRVSTA…VLLKGQKWKP (78 aa). The RKKR polybasic motif signature appears at 123-126; it reads RKKR.

It belongs to the CIDE family. In terms of assembly, homodimer. Homooligomer; undergoes liquid-liquid phase separation (LLPS) via its N-terminus, facilitating lipid droplet fusion, occurs at the lipid droplet contact sites. Interacts with CIDEA. Interacts with PLIN1. Interacts with NFAT5; this interaction is direct and retains NFAT5 in the cytoplasm. Interacts with CEBPB. Interacts with isoform CLSTN3beta of CLSTN3; inhibiting the lipid transferase activity of CIDEC. In terms of processing, ubiquitinated and targeted to proteasomal degradation, resulting in a short half-life (about 15 minutes in 3T3-L1 cells). Protein stability depends on triaclyglycerol synthesis, fatty acid availability and lipid droplet formation. As to expression, expressed almost exclusively in adipose tissue, including subcutaneous and epididymal white adipose tissue (at protein level). Although abundantly present in brown adipose tissue at the mRNA level, the protein is almost undetectable in this tissue, or at moderate levels. Expressed in the mammary gland, in stromal adipose tissue, but becomes undetectable at the end of pregnancy and during lactation (at protein level). Expressed at low levels in skeletal muscle and heart.

The protein localises to the lipid droplet. Its subcellular location is the endoplasmic reticulum. The protein resides in the nucleus. It catalyses the reaction a triacyl-sn-glycerol(in) = a triacyl-sn-glycerol(out). Functionally, lipid transferase specifically expressed in white adipose tissue, which promotes unilocular lipid droplet formation by mediating lipid droplet fusion. Lipid droplet fusion promotes their enlargement, restricting lipolysis and favoring lipid storage. Localizes on the lipid droplet surface, at focal contact sites between lipid droplets, and mediates atypical lipid droplet fusion by undergoing liquid-liquid phase separation (LLPS) and promoting directional net neutral lipid transfer from the smaller to larger lipid droplets. The transfer direction may be driven by the internal pressure difference between the contacting lipid droplet pair. Its role in neutral lipid transfer and lipid droplet enlargement is activated by the interaction with PLIN1. May also act as a CEBPB coactivator in the white adipose tissue to control the expression of a subset of CEBPB downstream target genes, including SOCS1, SOCS3, TGFB1, TGFBR1, ID2 and XDH. When overexpressed in preadipocytes, induces apoptosis or increases cell susceptibility to apoptosis induced by serum deprivation or TGFB treatment. The polypeptide is Lipid transferase CIDEC (Mus musculus (Mouse)).